Consider the following 189-residue polypeptide: Ribosome maturation factor RimM (189 aa).

One can recognise a PRC barrel domain in the interval 95–177 (EDDEFYYADL…AGLVDDPEEL (83 aa)).

It belongs to the RimM family. Binds ribosomal protein uS19.

The protein resides in the cytoplasm. Its function is as follows. An accessory protein needed during the final step in the assembly of 30S ribosomal subunit, possibly for assembly of the head region. Essential for efficient processing of 16S rRNA. May be needed both before and after RbfA during the maturation of 16S rRNA. It has affinity for free ribosomal 30S subunits but not for 70S ribosomes. The polypeptide is Ribosome maturation factor RimM (Rhizobium leguminosarum bv. trifolii (strain WSM2304)).